A 309-amino-acid chain; its full sequence is NAD kinase (309 aa).

D89 functions as the Proton acceptor in the catalytic mechanism. NAD(+)-binding positions include 89 to 90 (DG), 163 to 164 (NE), H174, R191, D193, and 204 to 209 (TAYALS).

The protein belongs to the NAD kinase family. A divalent metal cation serves as cofactor.

It is found in the cytoplasm. The enzyme catalyses NAD(+) + ATP = ADP + NADP(+) + H(+). Functionally, involved in the regulation of the intracellular balance of NAD and NADP, and is a key enzyme in the biosynthesis of NADP. Catalyzes specifically the phosphorylation on 2'-hydroxyl of the adenosine moiety of NAD to yield NADP. This is NAD kinase from Shewanella baltica (strain OS155 / ATCC BAA-1091).